Here is a 304-residue protein sequence, read N- to C-terminus: Methionyl-tRNA formyltransferase (304 aa).

Residue serine 109–proline 112 coordinates (6S)-5,6,7,8-tetrahydrofolate.

This sequence belongs to the Fmt family.

It carries out the reaction L-methionyl-tRNA(fMet) + (6R)-10-formyltetrahydrofolate = N-formyl-L-methionyl-tRNA(fMet) + (6S)-5,6,7,8-tetrahydrofolate + H(+). Attaches a formyl group to the free amino group of methionyl-tRNA(fMet). The formyl group appears to play a dual role in the initiator identity of N-formylmethionyl-tRNA by promoting its recognition by IF2 and preventing the misappropriation of this tRNA by the elongation apparatus. This Rickettsia bellii (strain RML369-C) protein is Methionyl-tRNA formyltransferase.